Reading from the N-terminus, the 516-residue chain is 4-hydroxybenzoate brominase (decarboxylating) (516 aa).

FAD contacts are provided by serine 13, glutamate 32, valine 40, phenylalanine 41, histidine 51, valine 102, and glutamine 365.

Belongs to the FMO family. Requires FAD as cofactor.

The enzyme catalyses 2 bromide + 4-hydroxybenzoate + 2 NADPH + 2 O2 + 5 H(+) = 2,4-dibromophenol + CO2 + 2 NADP(+) + 4 H2O. The catalysed reaction is bromide + 4-hydroxybenzoate + NADPH + O2 + 2 H(+) = 3-bromo-4-hydroxybenzoate + NADP(+) + 2 H2O. It catalyses the reaction 3-bromo-4-hydroxybenzoate + bromide + NADPH + O2 + 3 H(+) = 2,4-dibromophenol + CO2 + NADP(+) + 2 H2O. It carries out the reaction 3,4-dihydroxybenzoate + 2 bromide + 2 NADPH + 2 O2 + 5 H(+) = 3,5-dibromobenzene-1,2-diol + CO2 + 2 NADP(+) + 4 H2O. The enzyme catalyses 3,4-dihydroxybenzoate + bromide + NADPH + O2 + 2 H(+) = 3-bromo-4,5-dihydroxybenzoate + NADP(+) + 2 H2O. The catalysed reaction is 3-bromo-4,5-dihydroxybenzoate + bromide + NADPH + O2 + 3 H(+) = 3,5-dibromobenzene-1,2-diol + CO2 + NADP(+) + 2 H2O. Its function is as follows. Brominase involved in the biosynthesis of polybrominated aromatic organic compounds. Catalyzes the bromination of 4-hydroxybenzoate (4-HBA) to 3-bromo-4-hydroxybenzoate, followed by bromination and decarboxylation of 3-bromo-4-hydroxybenzoate to 2,4-dibromophenol. Can also use 3,4-dihydroxybenzoate, with lower efficiency, forming 3-bromo-4,5-dihydroxybenzoate and 3,5-dibromobenzene-1,2-diol. The sequence is that of 4-hydroxybenzoate brominase (decarboxylating) from Marinomonas mediterranea (strain ATCC 700492 / JCM 21426 / NBRC 103028 / MMB-1).